Consider the following 192-residue polypeptide: Adenylate kinase (192 aa).

Glycine 10–threonine 15 is a binding site for ATP. Positions glycine 30–alanine 56 are NMP. AMP is bound by residues threonine 31, arginine 36, glycine 82–arginine 85, and glutamine 89. The tract at residues lysine 123–aspartate 133 is LID. ATP is bound at residue arginine 124. AMP-binding residues include arginine 130 and arginine 141. Aspartate 169 serves as a coordination point for ATP.

The protein belongs to the adenylate kinase family. In terms of assembly, monomer.

It localises to the cytoplasm. It carries out the reaction AMP + ATP = 2 ADP. It participates in purine metabolism; AMP biosynthesis via salvage pathway; AMP from ADP: step 1/1. Functionally, catalyzes the reversible transfer of the terminal phosphate group between ATP and AMP. Plays an important role in cellular energy homeostasis and in adenine nucleotide metabolism. This Rhodopirellula baltica (strain DSM 10527 / NCIMB 13988 / SH1) protein is Adenylate kinase.